A 436-amino-acid chain; its full sequence is Immediate-early phosphoprotein 57 (436 aa).

The segment at 71 to 140 (VPKRERSKTP…TPSNQNPLTE (70 aa)) is disordered. Over residues 104-119 (QRPAPSARSRRPQPYS) the composition is skewed to low complexity. Residues 127-138 (KPQSTPSNQNPL) show a composition bias toward polar residues.

It belongs to the herpesviridae UL69 family.

It localises to the host nucleus. It is found in the host cytoplasm. In terms of biological role, acts at a post-transcriptional level to regulate viral gene expression. This Alcelaphine herpesvirus 1 (strain C500) (AlHV-1) protein is Immediate-early phosphoprotein 57 (57).